A 152-amino-acid polypeptide reads, in one-letter code: Calmodulin (152 aa).

Alanine 2 is modified (N-acetylalanine). 4 EF-hand domains span residues glutamate 10–asparagine 45, proline 46–aspartate 81, aspartate 83–lysine 118, and leucine 119–asparagine 152. Ca(2+) contacts are provided by aspartate 23, aspartate 25, aspartate 27, serine 29, glutamate 34, aspartate 59, aspartate 61, asparagine 63, asparagine 65, glutamate 70, aspartate 96, aspartate 98, asparagine 100, tyrosine 102, glutamate 107, aspartate 132, aspartate 134, aspartate 136, glutamine 138, and glutamate 143.

It belongs to the calmodulin family. Interacts with cmbB, numA/nucleomorphin, pgkA/phosphoglycerate kinase, and thyB/thymidine kinase in the presence of Ca(2+). Interacts with dwwA in the absence of Ca(2+). The N-terminus is blocked. Post-translationally, trimethylation of Lys-118 observed in other calmodulins is absent here.

It is found in the contractile vacuole. Its function is as follows. Calmodulin mediates the control of a large number of enzymes, ion channels and other proteins by Ca(2+). Among the enzymes to be stimulated by the calmodulin-Ca(2+) complex are a number of protein kinases and phosphatases. This Dictyostelium discoideum (Social amoeba) protein is Calmodulin (calA).